The chain runs to 393 residues: Sulfate adenylyltransferase (393 aa).

It belongs to the sulfate adenylyltransferase family.

It catalyses the reaction sulfate + ATP + H(+) = adenosine 5'-phosphosulfate + diphosphate. It participates in sulfur metabolism; hydrogen sulfide biosynthesis; sulfite from sulfate: step 1/3. This Symbiobacterium thermophilum (strain DSM 24528 / JCM 14929 / IAM 14863 / T) protein is Sulfate adenylyltransferase.